The primary structure comprises 198 residues: Ribonuclease HII (198 aa).

The RNase H type-2 domain maps to 10–198; sequence HLVAGVDEVG…PVKRALGLVS (189 aa). Positions 16, 17, and 108 each coordinate a divalent metal cation.

It belongs to the RNase HII family. Requires Mn(2+) as cofactor. Mg(2+) is required as a cofactor.

The protein resides in the cytoplasm. The catalysed reaction is Endonucleolytic cleavage to 5'-phosphomonoester.. Its function is as follows. Endonuclease that specifically degrades the RNA of RNA-DNA hybrids. This Salmonella paratyphi A (strain AKU_12601) protein is Ribonuclease HII.